The primary structure comprises 460 residues: ESX-1 secretion-associated protein EspB (460 aa).

Disordered regions lie at residues 92 to 116, 303 to 335, and 405 to 441; these read LDND…SAEL, PSDG…PADT, and LGGG…TEDR.

Post-translationally, cleaved in the C-terminal region by MycP1.

It is found in the secreted. The polypeptide is ESX-1 secretion-associated protein EspB (Mycobacterium tuberculosis (strain CDC 1551 / Oshkosh)).